The chain runs to 139 residues: AP-4 complex subunit sigma (139 aa).

Belongs to the adaptor complexes small subunit family. As to quaternary structure, may be part of the adaptor protein complex 4 (AP-4), a heterotetramer composed of two large adaptins (epsilon-type subunitand beta-type subunit), a medium adaptin (mu-type subunit) and a small adaptin (sigma-type).

The protein resides in the golgi apparatus. The protein localises to the trans-Golgi network membrane. Probable component of an adaptor protein complex. Adaptor protein complexes are vesicle coat components involved both in vesicle formation and cargo selection. They control the vesicular transport of proteins in different trafficking pathways. The sequence is that of AP-4 complex subunit sigma from Dictyostelium discoideum (Social amoeba).